A 274-amino-acid polypeptide reads, in one-letter code: MPFRSNNPITRDELLSRFFPQFHPVTTFNSGLSGGSFLIEHQGQRFVVRQPHDPDAPQSAFLRQYRALSQLPASIAPKPHLYLRDWMVVDYLPGAVKTYLPDTNELAGLLYYLHQQPRFGWRITLLPLLELYWQQSDPARRTVGWLRMLKRLRKAREPRPLRLSPLHMDVHAGNLVHSASGLKLIDWEYAGDGDTALELAAVWVENTEQHRQLVNDYATRAKIYPAQLWRQVRRWFPWLLMLKAGWFEYRWRQTGDQQFIRLADDTWRQLLIKQ.

This sequence belongs to the thiamine kinase family.

It catalyses the reaction thiamine + ATP = thiamine phosphate + ADP + H(+). The protein operates within cofactor biosynthesis; thiamine diphosphate biosynthesis; thiamine phosphate from thiamine: step 1/1. Catalyzes the ATP-dependent phosphorylation of thiamine to thiamine phosphate. Is involved in thiamine salvage. This Shigella boydii serotype 4 (strain Sb227) protein is Thiamine kinase.